A 553-amino-acid polypeptide reads, in one-letter code: Phospholipase B (553 aa).

The N-terminal stretch at 1–35 (MIRFGNPSSSDKRRQRCRSWYWGGLLLLWAVAETR) is a signal peptide. Asparagine 313, asparagine 416, and asparagine 531 each carry an N-linked (GlcNAc...) asparagine glycan.

This sequence belongs to the phospholipase B-like family. In terms of tissue distribution, expressed by the venom gland.

Its subcellular location is the secreted. Functionally, may cause hemolysis or may be involved in protein folding and translation. The chain is Phospholipase B from Crotalus adamanteus (Eastern diamondback rattlesnake).